Here is a 247-residue protein sequence, read N- to C-terminus: V-type proton ATPase subunit D (247 aa).

This sequence belongs to the V-ATPase D subunit family. As to quaternary structure, V-ATPase is a heteromultimeric enzyme made up of two complexes: the ATP-hydrolytic V1 complex and the proton translocation V0 complex. The V1 complex consists of three catalytic AB heterodimers that form a heterohexamer, three peripheral stalks each consisting of EG heterodimers, one central rotor including subunits D and F, and the regulatory subunits C and H. The proton translocation complex V0 consists of the proton transport subunit a, a ring of proteolipid subunits c9c'', rotary subunit d, subunits e and f, and the accessory subunits ATP6AP1/Ac45 and ATP6AP2/PRR. Interacts with SNX10.

The protein resides in the membrane. It localises to the cytoplasmic vesicle. The protein localises to the clathrin-coated vesicle membrane. Its subcellular location is the cytoplasm. It is found in the cytoskeleton. The protein resides in the microtubule organizing center. It localises to the centrosome. The protein localises to the cell projection. Its subcellular location is the cilium. Subunit of the V1 complex of vacuolar(H+)-ATPase (V-ATPase), a multisubunit enzyme composed of a peripheral complex (V1) that hydrolyzes ATP and a membrane integral complex (V0) that translocates protons. V-ATPase is responsible for acidifying and maintaining the pH of intracellular compartments and in some cell types, is targeted to the plasma membrane, where it is responsible for acidifying the extracellular environment. May play a role in cilium biogenesis through regulation of the transport and the localization of proteins to the cilium. This chain is V-type proton ATPase subunit D (ATP6V1D), found in Oryctolagus cuniculus (Rabbit).